A 299-amino-acid chain; its full sequence is Plasmodesmata-located protein 5 (299 aa).

The N-terminal stretch at 1–25 (MIKTKTTSLLCFLLTAVILMNPSSS) is a signal peptide. The Extracellular segment spans residues 26–264 (SPTDNYIYAV…NKDDNGVGKT (239 aa)). Gnk2-homologous domains follow at residues 29-135 (DNYI…NKSF) and 137-237 (GVQD…VGGS). 6 disulfides stabilise this stretch: cysteine 36–cysteine 113, cysteine 89–cysteine 98, cysteine 101–cysteine 126, cysteine 148–cysteine 215, cysteine 191–cysteine 200, and cysteine 203–cysteine 228. Residues 265–285 (LAIIIGIVTLIILLVVFLAFV) traverse the membrane as a helical segment. Positions 265–285 (LAIIIGIVTLIILLVVFLAFV) are necessary and sufficient for plasmodesmal targeting. Residues 286–299 (GKCCRKLQDEKWCK) are Cytoplasmic-facing.

This sequence belongs to the cysteine-rich repeat secretory protein family. Plasmodesmata-located proteins (PDLD) subfamily. In terms of assembly, monomer. Interacts with PDLP1. As to quaternary structure, (Microbial infection) Interacts with Grapevine fanleaf virus (GFLV) 2B-MP. In terms of tissue distribution, highly expressed in inflorescence nodes and rosette senescent leaves. Mostly expressed in cell wall junctions between leaf epidermal and mesophyl cells, and to a lesser extent at the cross walls between epidermal or cortex cells within the hypocotyl (at protein level). Low vascular expression in seedling and mature leaf, but high expression in senescing leaves (at protein level).

It localises to the cell membrane. The protein localises to the cell junction. It is found in the plasmodesma. Modulates cell-to-cell trafficking. Has a positive role in innate immunity. Required for systemic acquired resistance (SAR) which is mediated by the signaling molecules azelaic acid (AzA), glycerol-3-phosphate (G3P), and salicylic acid (SA). Negative regulator of plasmodesmata permeability triggered by SA during immune responses, through regulation of callose deposition. Delays the trafficking of Tobacco Mosaic Virus (TMV) movement protein (MP). Required for symplastic signal transport. In Arabidopsis thaliana (Mouse-ear cress), this protein is Plasmodesmata-located protein 5.